We begin with the raw amino-acid sequence, 505 residues long: MHKAQKFALGLLAAAAVATASDVVQLKKDTFDDFIKTNDLVLAEFFAPWCGHCKALAPEYEEAATTLKEKNIKLAKVDCTEETDLCQQHGVEGYPTLKVFRGLDNVSPYKGQRKAAAITSYMIKQSLPAVSEVTKDNLEEFKKADKAVLVAYVDASDKASSEVFTQVAEKLRDNYPFGSSSDAALAEAEGVKAPAIVLYKDFDEGKAVFSEKFEVEAIEKFAKTGATPLIGEIGPETYSDYMSAGIPLAYIFAETAEERKELSDKLKPIAEAQRGVINFGTIDAKAFGAHAGNLNLKTDKFPAFAIQEVAKNQKFPFDQEKEITFEAIKAFVDDFVAGKIEPSIKSEPIPEKQEGPVTVVVAKNYNEIVLDDTKDVLIEFYAPWCGHCKALAPKYEELGALYAKSEFKDRVVIAKVDATANDVPDEIQGFPTIKLYPAGAKGQPVTYSGSRTVEDLIKFIAENGKYKAAISEDAEETSSATETTTETATKSEEAAKETATEHDEL.

Residues 1 to 20 (MHKAQKFALGLLAAAAVATA) form the signal peptide. Thioredoxin domains follow at residues 21–128 (SDVV…QSLP) and 335–465 (FVAG…ENGK). Active-site nucleophile residues include Cys-50, Cys-53, Cys-385, and Cys-388. 2 cysteine pairs are disulfide-bonded: Cys-50-Cys-53 and Cys-385-Cys-388. A disordered region spans residues 470–505 (ISEDAEETSSATETTTETATKSEEAAKETATEHDEL). Positions 477-488 (TSSATETTTETA) are enriched in low complexity. Residues 489-505 (TKSEEAAKETATEHDEL) show a composition bias toward basic and acidic residues. The Prevents secretion from ER motif lies at 502 to 505 (HDEL).

It belongs to the protein disulfide isomerase family.

It is found in the endoplasmic reticulum lumen. It catalyses the reaction Catalyzes the rearrangement of -S-S- bonds in proteins.. In terms of biological role, participates in the folding of proteins containing disulfide bonds, may be involved in glycosylation, prolyl hydroxylation and triglyceride transfer. This chain is Protein disulfide-isomerase, found in Humicola insolens (Soft-rot fungus).